The sequence spans 835 residues: U-box domain-containing protein 35 (835 aa).

3 disordered regions span residues 1-22 (MSRSPDKLALPPPPPPPPSRTV), 177-303 (VRPS…SSNR), and 410-457 (EKEK…LEGT). The segment covering 10 to 19 (LPPPPPPPPS) has biased composition (pro residues). Over residues 195-218 (RTNSSSGSSGPTSDSSDVMSSAHD) the composition is skewed to low complexity. A compositionally biased stretch (polar residues) spans 269–282 (SSINRSSTDTTSRW). Basic and acidic residues-rich tracts occupy residues 285-295 (RRRDYEERKEA) and 410-455 (EKEK…EKLE). Residues 340–459 (QSYTDNQVNL…EKEKLEGTLG (120 aa)) adopt a coiled-coil conformation. The 266-residue stretch at 480–745 (FSEELKIGMG…DLKDQILPAL (266 aa)) folds into the Protein kinase domain. ATP is bound by residues 486 to 494 (IGMGAYGAV) and lysine 507. The active-site Proton acceptor is the aspartate 602. The region spanning 765 to 835 (QPPTHFICPL…TAIMEWRSTR (71 aa)) is the U-box domain.

The protein belongs to the protein kinase superfamily. Ser/Thr protein kinase family.

It catalyses the reaction L-seryl-[protein] + ATP = O-phospho-L-seryl-[protein] + ADP + H(+). The enzyme catalyses L-threonyl-[protein] + ATP = O-phospho-L-threonyl-[protein] + ADP + H(+). The catalysed reaction is S-ubiquitinyl-[E2 ubiquitin-conjugating enzyme]-L-cysteine + [acceptor protein]-L-lysine = [E2 ubiquitin-conjugating enzyme]-L-cysteine + N(6)-ubiquitinyl-[acceptor protein]-L-lysine.. Its pathway is protein modification; protein ubiquitination. In terms of biological role, functions as an E3 ubiquitin ligase. The protein is U-box domain-containing protein 35 (PUB35) of Arabidopsis thaliana (Mouse-ear cress).